Consider the following 451-residue polypeptide: Chromosomal replication initiator protein DnaA (451 aa).

A domain I, interacts with DnaA modulators region spans residues 1 to 73 (MNAHPKEIWE…IRSLQMVTSQ (73 aa)). The interval 73-112 (QKYNVKFLISSELPEEFLTLDTINEQNIKGSIIVSDEMSA) is domain II. The segment at 113–329 (MLNPKYTFTS…GALIRIVAFS (217 aa)) is domain III, AAA+ region. ATP contacts are provided by Gly157, Gly159, Lys160, and Thr161. The interval 330 to 451 (SLTNKEISVD…NDLTKRLDQQ (122 aa)) is domain IV, binds dsDNA.

It belongs to the DnaA family. Oligomerizes as a right-handed, spiral filament on DNA at oriC.

It is found in the cytoplasm. In terms of biological role, plays an essential role in the initiation and regulation of chromosomal replication. ATP-DnaA binds to the origin of replication (oriC) to initiate formation of the DNA replication initiation complex once per cell cycle. Binds the DnaA box (a 9 base pair repeat at the origin) and separates the double-stranded (ds)DNA. Forms a right-handed helical filament on oriC DNA; dsDNA binds to the exterior of the filament while single-stranded (ss)DNA is stabiized in the filament's interior. The ATP-DnaA-oriC complex binds and stabilizes one strand of the AT-rich DNA unwinding element (DUE), permitting loading of DNA polymerase. After initiation quickly degrades to an ADP-DnaA complex that is not apt for DNA replication. Binds acidic phospholipids. This chain is Chromosomal replication initiator protein DnaA, found in Clostridium kluyveri (strain NBRC 12016).